The primary structure comprises 190 residues: dCTP deaminase (190 aa).

113–118 (KSTYAR) contacts dCTP. E139 (proton donor/acceptor) is an active-site residue. 4 residues coordinate dCTP: Q158, Y172, K181, and Q182.

It belongs to the dCTP deaminase family. As to quaternary structure, homotrimer.

The enzyme catalyses dCTP + H2O + H(+) = dUTP + NH4(+). Its pathway is pyrimidine metabolism; dUMP biosynthesis; dUMP from dCTP (dUTP route): step 1/2. Catalyzes the deamination of dCTP to dUTP. The chain is dCTP deaminase from Chlamydia abortus (strain DSM 27085 / S26/3) (Chlamydophila abortus).